The chain runs to 348 residues: Aminotransferase atnJ (348 aa).

R79 provides a ligand contact to pyridoxal 5'-phosphate. K180 is subject to N6-(pyridoxal phosphate)lysine. Position 216 (E216) interacts with pyridoxal 5'-phosphate.

This sequence belongs to the class-IV pyridoxal-phosphate-dependent aminotransferase family. Pyridoxal 5'-phosphate is required as a cofactor.

It functions in the pathway secondary metabolite biosynthesis. In terms of biological role, aminotransferase; part of the gene cluster that mediates the biosynthesis of aspercryptins, linear lipopeptides built from six amino acids including 2 highly unusual and nonproteogenic amino acids, 2-amino-octanoic acid (2aoa) and 2-amino-dodecanol (2adol). The core structure of aspercryptins is as follows: Ser/Ala-Thr-Ile/Val-2aoa-Asn-2adol. The first step of aspercryptin biosynthesis is the generation of the fatty acid precursors, octanoic and dodecanoic acids, by the FAS subunits atnF and atnM. The fatty acid precursors are likely transformed into the corresponding alpha-amino fatty acids in three steps. First, they are hydroxylated by the cytochrome P450 monooxygenase atnE, then oxidized to the corresponding alpha-keto acids by the NAD(P)-dependent oxidoreductase atnD, and finally converted to the alpha-amino fatty acids by the PLP-dependent aminotransferases atnH or atnJ. the alpha-amino fatty acids, 2-amino-octanoic and 2-amino-dodecanoic acids, are recognized, activated, and covalently tethered to the NRPS atnA by its fourth and sixth adenylation domains. The second module of atnA is the Thr module and contains an epimerase (E) domain responsible for the epimerization of Thr to D-allo-Thr. Additionally, despite atnA having only one epimerase domain, the first amino acid of aspercryptin A1 is D-Ser, suggesting that serine is either loaded directly as D-Ser on the first module or that the epimerase domain in the threonine module epimerizes both L-Ser and L-Thr. After condensation of the hexapeptide of aspercryptin, the C-terminal reductase (TE) domain might be involved in the reductive release and production of the aldehyde hexapeptide. Further reduction would generate aspercryptins. The variety of aspercryptins produced reflects the flexibility of the atnA NRPS, allowing incorporation of alanine instead of serine, valine for isoleucine, and a C10 fatty amino alcohol instead of the C12 version. AtnB seems to be involved in the selectivity for Ile versus Val by the third module. Moreover, type B, C and D aspercryptins have an additional N-terminal cichorine, acetyl and propionyl group respectively. This chain is Aminotransferase atnJ, found in Emericella nidulans (strain FGSC A4 / ATCC 38163 / CBS 112.46 / NRRL 194 / M139) (Aspergillus nidulans).